The primary structure comprises 89 residues: Small ribosomal subunit protein bS16 (89 aa).

Belongs to the bacterial ribosomal protein bS16 family.

This is Small ribosomal subunit protein bS16 from Gloeobacter violaceus (strain ATCC 29082 / PCC 7421).